Here is a 353-residue protein sequence, read N- to C-terminus: L-tryptophan dehydrogenase (353 aa).

Residue Arg-44 participates in NAD(+) binding. Lys-80 serves as the catalytic Proton donor/acceptor. NAD(+)-binding positions include Asp-114, Thr-146, Gly-176–Gly-181, Lys-204, and Ala-255–Asn-257.

The protein belongs to the Glu/Leu/Phe/Val dehydrogenases family. As to quaternary structure, homodimer.

The catalysed reaction is L-tryptophan + NAD(+) + H2O = indole-3-pyruvate + NH4(+) + NADH + H(+). Its activity is regulated as follows. Highly susceptible to inhibition by indole-3-pyruvate. Activity is not affected by the presence of metal ions, EDTA, KCl or DMSO. Its function is as follows. Catalyzes the reversible oxidative deamination of L-tryptophan to indole-3-pyruvate in the presence of NAD(+). Shows weak activity with L-phenylalanine, but cannot use other L-amino acids and D-Trp. Cannot use NADP(+) for oxidative deamination of L-Trp, and shows only weak activity with NADPH for reductive amination of indole-3-pyruvate. Involved in the biosynthesis of scytonemin, a cyanobacterial radiation-absorbing pigment. The sequence is that of L-tryptophan dehydrogenase from Nostoc punctiforme.